The following is a 121-amino-acid chain: Large ribosomal subunit protein uL22 (121 aa).

This sequence belongs to the universal ribosomal protein uL22 family. In terms of assembly, part of the 50S ribosomal subunit.

Functionally, this protein binds specifically to 23S rRNA; its binding is stimulated by other ribosomal proteins, e.g. L4, L17, and L20. It is important during the early stages of 50S assembly. It makes multiple contacts with different domains of the 23S rRNA in the assembled 50S subunit and ribosome. The globular domain of the protein is located near the polypeptide exit tunnel on the outside of the subunit, while an extended beta-hairpin is found that lines the wall of the exit tunnel in the center of the 70S ribosome. The sequence is that of Large ribosomal subunit protein uL22 from Parasynechococcus marenigrum (strain WH8102).